The primary structure comprises 162 residues: UPF0262 protein AZC_3148 (162 aa).

It belongs to the UPF0262 family.

This is UPF0262 protein AZC_3148 from Azorhizobium caulinodans (strain ATCC 43989 / DSM 5975 / JCM 20966 / LMG 6465 / NBRC 14845 / NCIMB 13405 / ORS 571).